We begin with the raw amino-acid sequence, 63 residues long: Cecropin-C (63 aa).

Residues 1-23 form the signal peptide; sequence MNFNKIFVFVALILAISLGQSEA. R62 carries the post-translational modification Arginine amide.

Belongs to the cecropin family.

Its subcellular location is the secreted. In terms of biological role, cecropins have lytic and antibacterial activity against several Gram-positive and Gram-negative bacteria. In Drosophila orena (Fruit fly), this protein is Cecropin-C (CecC).